Reading from the N-terminus, the 278-residue chain is Large ribosomal subunit protein uL2 (278 aa).

The interval 226 to 278 is disordered; the sequence is MNPIDHPHGGGEGKTAAGRHPVSPWGTPSKGSRTRKNKRTSNMIVRSRYSKKG.

Belongs to the universal ribosomal protein uL2 family. As to quaternary structure, part of the 50S ribosomal subunit. Forms a bridge to the 30S subunit in the 70S ribosome.

Functionally, one of the primary rRNA binding proteins. Required for association of the 30S and 50S subunits to form the 70S ribosome, for tRNA binding and peptide bond formation. It has been suggested to have peptidyltransferase activity; this is somewhat controversial. Makes several contacts with the 16S rRNA in the 70S ribosome. This chain is Large ribosomal subunit protein uL2, found in Nitrosomonas europaea (strain ATCC 19718 / CIP 103999 / KCTC 2705 / NBRC 14298).